The chain runs to 310 residues: Sporozoite surface protein P36 (310 aa).

Positions 1–24 are cleaved as a signal peptide; that stretch reads MRKALYSLLFYMCICLYIYTPVFM. 6-Cys domains lie at 25–157 and 168–309; these read ANLK…IKKT and YIKG…STKA. 6 cysteine pairs are disulfide-bonded: C38/C48, C62/C137, C80/C135, C172/C196, C210/C291, and C227/C289. N-linked (GlcNAc...) asparagine glycosylation is found at N72, N114, and N118. N-linked (GlcNAc...) asparagine glycosylation is present at N290.

The protein localises to the cell surface. It is found in the cell membrane. Involved in sporozoite infection of hepatocytes and replication therein. The chain is Sporozoite surface protein P36 (P36) from Plasmodium yoelii yoelii.